A 480-amino-acid chain; its full sequence is 2-phosphoxylose phosphatase 1 (480 aa).

Residues 1–6 are Cytoplasmic-facing; it reads MLYRNR. A helical; Signal-anchor for type II membrane protein membrane pass occupies residues 7 to 27; sequence FLVLLALAGLLAFLSLSLQFF. The Lumenal segment spans residues 28–480; sequence HLIPVSTTKN…YYDACHGEGA (453 aa). The Nucleophile role is filled by His-97. Asn-194, Asn-305, and Asn-354 each carry an N-linked (GlcNAc...) asparagine glycan. Asp-379 serves as the catalytic Proton donor.

It belongs to the histidine acid phosphatase family. As to quaternary structure, interacts with B3GAT3; the interaction increases the 2-phosphoxylose phosphatase activity of PXYLP1 during completion of linkage region formation in a B3GAT3-mediated manner.

The protein localises to the golgi apparatus membrane. It catalyses the reaction 3-O-[beta-D-GlcA-(1-&gt;3)-beta-D-Gal-(1-&gt;3)-beta-D-Gal-(1-&gt;4)-beta-D-2-O-P-Xyl]-L-seryl-[protein] + H2O = 3-O-(beta-D-GlcA-(1-&gt;3)-beta-D-Gal-(1-&gt;3)-beta-D-Gal-(1-&gt;4)-beta-D-Xyl)-L-seryl-[protein] + phosphate. In terms of biological role, responsible for the 2-O-dephosphorylation of xylose in the glycosaminoglycan-protein linkage region of proteoglycans thereby regulating the amount of mature glycosaminoglycan (GAG) chains. Sulfated glycosaminoglycans (GAGs), including heparan sulfate and chondroitin sulfate, are synthesized on the so-called common GAG-protein linkage region (GlcUAbeta1-3Galbeta1-3Galbeta1-4Xylbeta1-O-Ser) of core proteins, which is formed by the stepwise addition of monosaccharide residues by the respective specific glycosyltransferases. Xylose 2-O-dephosphorylation during completion of linkage region formation is a prerequisite for the initiation and efficient elongation of the repeating disaccharide region of GAG chains. The chain is 2-phosphoxylose phosphatase 1 from Rattus norvegicus (Rat).